A 222-amino-acid polypeptide reads, in one-letter code: DNA-directed RNA polymerase V subunit 5A (222 aa).

This sequence belongs to the archaeal Rpo5/eukaryotic RPB5 RNA polymerase subunit family. As to quaternary structure, component of the RNA polymerase V complex. Expressed in roots, leaves, siliques and seeds, and to a lower level, in flower buds and flowers.

Its subcellular location is the nucleus. Functionally, DNA-dependent RNA polymerase catalyzes the transcription of DNA into RNA using the four ribonucleoside triphosphates as substrates. Component of RNA polymerase V involved in RNA-directed DNA methylation-dependent (RdDM) silencing of endogenous repeated sequences, including transposable elements. Required for establishment of DNA methylation. The chain is DNA-directed RNA polymerase V subunit 5A (NRPE5A) from Arabidopsis thaliana (Mouse-ear cress).